Reading from the N-terminus, the 463-residue chain is Fumarate hydratase class II (463 aa).

Residues 98–100 (SGT), 129–132 (HPND), 139–141 (SSN), and Thr187 contribute to the substrate site. His188 (proton donor/acceptor) is an active-site residue. The active site involves Ser318. Residues Ser319 and 324–326 (KVN) each bind substrate.

Belongs to the class-II fumarase/aspartase family. Fumarase subfamily. In terms of assembly, homotetramer.

Its subcellular location is the cytoplasm. The enzyme catalyses (S)-malate = fumarate + H2O. It participates in carbohydrate metabolism; tricarboxylic acid cycle; (S)-malate from fumarate: step 1/1. In terms of biological role, involved in the TCA cycle. Catalyzes the stereospecific interconversion of fumarate to L-malate. This Rhizobium meliloti (strain 1021) (Ensifer meliloti) protein is Fumarate hydratase class II.